A 1020-amino-acid polypeptide reads, in one-letter code: MATLSQPQSALPKTKIATTFGLSKDLKSPISVKVCYLECTRNNVSLVPLSTKFEDPTVFKKLSQIYKNSDLFVEIRVYDGKNNNLISTPVRTSYKAFNNKGRTWNQQLKLNIDYNQISIDAYLKFSICEIIDTKPSVFGVSYLSLFSHDSSTLRSGSHKIPVFMEDDPQYSKNIQYGTLIGLTDLEKRLIDYENGKYPRLNWLDKMVLPKVDATFLKTNNKDHDYYLYIELPQFEFPIVYSDIIYQIPTIEPITETTSKIPPDDTLNSNIIINSIDIPMATSHDPSIMKVYDPDFHITANNHLNPNATTFDPVELKYRKLERNIDNNTILDKELKPTPQLRDELLRIMIKPSNAELTDNEKNLIWKFRYYFSKNNSGNDPSNKSVKSFLPKFLRSINWENDYELDHTFKEIIPFYWNVDKLQIGDALELLGDYFNPYTLGKPTYQDDSMTSKSSKMKSDEKRFIKIYNNVCFLRKLAVERLKLANSEELLLYLLQLVQALKYEALIYEKSPPFCERSDQIEDNASSTLKSPLADFLIERAVENEKLGNFFYWYVKVENEDQLNNPHIDGPIKIYMDILNRYIELLKAHCHENRLPYYKHLKHQIWFIKKLTSLVELLRASFKKNEATAKKVEYLREYLANSGNELLKFPEPFPLPLDPSVMICGCYPEESSVFKSSLAPLKITLKTIEKKKHGHATSQLFGKRSRYGKYPLMFKIGDDLRQDQLVIQIIDLMDQLLKNENLDLKLTPYKILATSPISGLIQFVPNETLDSILSKTYPTSVTYSGGGETSDVPPSVSNNGILNYLRLHSQEQQSEEPISKSILSTNTSQSNTEIPVLPRQPKPTITSDLGVSPILMDNYVKSCAGYCVITYILGVGDRHLDNLLLSPNGKFWHADFGYILGRDPKPFPPLMKLPIQVIDGMGGLHHENYNVFKSYCFITYTTLRKNSNLILNLFQLMLDANIPDIQFDPSRVIEKVQEKFCLQMTEEEAILHFQNLINDSVNAFLPVVIDRLHSLAQYWRA.

The C2 PI3K-type domain occupies 49 to 210; that stretch reads LSTKFEDPTV…NWLDKMVLPK (162 aa). The PIK helical domain occupies 331 to 577; sequence DKELKPTPQL…DGPIKIYMDI (247 aa). Residues 666-1004 form the PI3K/PI4K catalytic domain; it reads YPEESSVFKS…LINDSVNAFL (339 aa). The interval 672-678 is G-loop; sequence VFKSSLA. The tract at residues 873-881 is catalytic loop; that stretch reads GVGDRHLDN. The segment at 892–913 is activation loop; the sequence is HADFGYILGRDPKPFPPLMKLP.

The protein belongs to the PI3/PI4-kinase family. In terms of assembly, component of the autophagy-specific VPS34 PI3-kinase complex I composed of at least VPS15, VPS30, VPS34, and of the VPS34 PI3-kinase complex II composed of VPS15, VPS30, VPS34 and VPS38. Interacts with VMNA7. In terms of processing, autophosphorylated.

The protein resides in the golgi apparatus. It localises to the trans-Golgi network membrane. The protein localises to the endosome membrane. The enzyme catalyses a 1,2-diacyl-sn-glycero-3-phospho-(1D-myo-inositol) + ATP = a 1,2-diacyl-sn-glycero-3-phospho-(1D-myo-inositol-3-phosphate) + ADP + H(+). Multifunctional phosphatidylinositol 3-kinase involved in acidification of vacuoles, pH-dependent cell growth, and autophagocytosis. Plays an important role in protein transport and virulence. Component of the autophagy-specific VPS34 PI3-kinase complex I essential to recruit the ATG8-phosphatidylinositol conjugate and the ATG12-ATG5 conjugate to the pre-autophagosomal structure. Also involved in endosome-to-Golgi retrograde transport as part of the VPS34 PI3-kinase complex II. This second complex is required for the endosome-to-Golgi retrieval of PEP1 and KEX2, and the recruitment of VPS5 and VPS7, two components of the retromer complex, to endosomal membranes (probably through the synthesis of a specific pool of phosphatidylinositol 3-phosphate recruiting the retromer to the endosomes). Finally, it might also be involved in ethanol tolerance and cell wall integrity. This Candida albicans (strain SC5314 / ATCC MYA-2876) (Yeast) protein is Phosphatidylinositol 3-kinase VPS34.